A 157-amino-acid polypeptide reads, in one-letter code: Polyferredoxin protein VhcB (157 aa).

4Fe-4S ferredoxin-type domains are found at residues 23 to 52, 62 to 92, and 100 to 129; these read NGIS…VVNP, KTER…MGKI, and DRIE…LNEE. [4Fe-4S] cluster contacts are provided by Cys-32, Cys-35, Cys-38, Cys-42, Cys-72, Cys-75, Cys-78, Cys-82, Cys-109, Cys-112, Cys-115, Cys-119, Cys-136, Cys-139, Cys-142, and Cys-146.

Requires [4Fe-4S] cluster as cofactor.

The protein is Polyferredoxin protein VhcB (vhcB) of Methanococcus voltae.